Here is a 619-residue protein sequence, read N- to C-terminus: Nucleolar GTP-binding protein 2 (619 aa).

The span at Met1–Arg10 shows a compositional bias: basic and acidic residues. The interval Met1–Lys24 is disordered. The 162-residue stretch at Trp222–Pro383 folds into the CP-type G domain. GTP contacts are provided by residues Gly332 to Ser339 and Asp376 to Ile380. Positions Pro473–Lys619 are disordered. Positions Met489–Ser500 are enriched in basic and acidic residues. The segment covering Ser536 to Ala546 has biased composition (acidic residues). Residues Glu547–Ala556 are compositionally biased toward basic and acidic residues. The segment covering Ser565–Ala603 has biased composition (acidic residues).

It belongs to the TRAFAC class YlqF/YawG GTPase family. NOG2 subfamily.

It is found in the nucleus. The protein resides in the nucleolus. GTPase that associates with pre-60S ribosomal subunits in the nucleolus and is required for their nuclear export and maturation. In Neurospora crassa (strain ATCC 24698 / 74-OR23-1A / CBS 708.71 / DSM 1257 / FGSC 987), this protein is Nucleolar GTP-binding protein 2 (nog-2).